A 307-amino-acid chain; its full sequence is MSIRRVVVLYGGISEERAVSLISGQQVVAALREAGYEVTPIEVGADLRDTIAALTPAPDVVFNALHGRFGEDGAIQGVLDWLNIPYTHSGVRASAIAMDKAAARTAFLAAGLPVAEGRLVTVEELAEQDPLPRPFVIKPANEGSAVGVHILHEGDNRRTEIARSWSFGGQALVEEYIPGRELTVGVLNDRALTVTDIRPRSAFYDYESKYAEGGSRHILPAQMHPDAFKRALDVALAAHHALGCRGATRSDFRYDDTRAEPGRLVLLEVNTQPGLTPTSLLPEQAALMGMDFVSLCRWMVEQATCRA.

In terms of domain architecture, ATP-grasp spans 104–301 (RTAFLAAGLP…FVSLCRWMVE (198 aa)). ATP is bound at residue 130 to 183 (PLPRPFVIKPANEGSAVGVHILHEGDNRRTEIARSWSFGGQALVEEYIPGRELT). Positions 251, 268, and 270 each coordinate Mg(2+).

The protein belongs to the D-alanine--D-alanine ligase family. The cofactor is Mg(2+). Mn(2+) is required as a cofactor.

It is found in the cytoplasm. The enzyme catalyses 2 D-alanine + ATP = D-alanyl-D-alanine + ADP + phosphate + H(+). Its pathway is cell wall biogenesis; peptidoglycan biosynthesis. Cell wall formation. The sequence is that of D-alanine--D-alanine ligase from Granulibacter bethesdensis (strain ATCC BAA-1260 / CGDNIH1).